Here is a 145-residue protein sequence, read N- to C-terminus: Holo-[acyl-carrier-protein] synthase (145 aa).

2 residues coordinate Mg(2+): D9 and E63.

Belongs to the P-Pant transferase superfamily. AcpS family. Mg(2+) serves as cofactor.

It localises to the cytoplasm. It catalyses the reaction apo-[ACP] + CoA = holo-[ACP] + adenosine 3',5'-bisphosphate + H(+). Transfers the 4'-phosphopantetheine moiety from coenzyme A to a Ser of acyl-carrier-protein. The protein is Holo-[acyl-carrier-protein] synthase of Burkholderia vietnamiensis (strain G4 / LMG 22486) (Burkholderia cepacia (strain R1808)).